Here is a 472-residue protein sequence, read N- to C-terminus: Hepatocyte nuclear factor 3-alpha (472 aa).

Positions 169-260 (AKPPYSYISL…GNMFENGCYL (92 aa)) form a DNA-binding region, fork-head. A disordered region spans residues 269–392 (EKQPGAGGGG…ESQLHLKGDP (124 aa)). Positions 273 to 289 (GAGGGGGSGSGGSGAKG) are enriched in gly residues. Phosphoserine is present on residues Ser-307 and Ser-331. Composition is skewed to low complexity over residues 322–332 (GAPAPGPAASP) and 351–366 (TPASSTAPPISSGPGA).

Binds DNA as a monomer. Interacts with FOXA2. Interacts with NKX2-1. Interacts with HDAC7. Interacts with the histone H3-H4 heterodimer. Associates with nucleosomes containing histone H2A. Interacts with AR. Interacts with NR0B2. In terms of tissue distribution, highly expressed in prostate and ESR1-positive breast tumors. Overexpressed in esophageal and lung adenocarcinomas.

The protein localises to the nucleus. Its function is as follows. Transcription factor that is involved in embryonic development, establishment of tissue-specific gene expression and regulation of gene expression in differentiated tissues. Is thought to act as a 'pioneer' factor opening the compacted chromatin for other proteins through interactions with nucleosomal core histones and thereby replacing linker histones at target enhancer and/or promoter sites. Binds DNA with the consensus sequence 5'-[AC]A[AT]T[AG]TT[GT][AG][CT]T[CT]-3'. Proposed to play a role in translating the epigenetic signatures into cell type-specific enhancer-driven transcriptional programs. Its differential recruitment to chromatin is dependent on distribution of histone H3 methylated at 'Lys-5' (H3K4me2) in estrogen-regulated genes. Involved in the development of multiple endoderm-derived organ systems such as liver, pancreas, lung and prostate; FOXA1 and FOXA2 seem to have at least in part redundant roles. Modulates the transcriptional activity of nuclear hormone receptors. Is involved in ESR1-mediated transcription; required for ESR1 binding to the NKX2-1 promoter in breast cancer cells; binds to the RPRM promoter and is required for the estrogen-induced repression of RPRM. Involved in regulation of apoptosis by inhibiting the expression of BCL2. Involved in cell cycle regulation by activating expression of CDKN1B, alone or in conjunction with BRCA1. Originally described as a transcription activator for a number of liver genes such as AFP, albumin, tyrosine aminotransferase, PEPCK, etc. Interacts with the cis-acting regulatory regions of these genes. Involved in glucose homeostasis. The polypeptide is Hepatocyte nuclear factor 3-alpha (FOXA1) (Homo sapiens (Human)).